The chain runs to 93 residues: GWPAYPGSNGIRSSVCQKKLGCGSKNLASLGVCKAFCPGRKRFWQKCGKNGSSGKGSRICNPVPAHAVEKAGKGLIKVTDMAVAAIAKYAGKK.

Disulfide bonds link Cys-16–Cys-37, Cys-22–Cys-33, and Cys-47–Cys-60.

It belongs to the worm cytolysin family. Localized within the skin and proboscis and are most readily isolated from body mucus secretions.

The protein resides in the secreted. In terms of biological role, cytolysin that shows hemolytic activity (on bovine erythrocytes, HC(50)=5.75 mg/ml). This hemolytic activity is completely inhibited by small unilamelar vesicles composed of PC/PG, PC/PI and PC/PS in 1:1 molar ratios (with at least 100 mg/ml concentration). The sequence is that of Parbolysin P3 from Parborlasia corrugatus (Antarctic nemertean worm).